The sequence spans 276 residues: UPF0328 protein ECU04_0100 (276 aa).

Residues Met1–His24 form a disordered region.

Belongs to the UPF0328 family.

The chain is UPF0328 protein ECU04_0100 from Encephalitozoon cuniculi (strain GB-M1) (Microsporidian parasite).